An 85-amino-acid polypeptide reads, in one-letter code: RNA-binding protein Hfq (85 aa).

Residues Asp-9–Pro-68 enclose the Sm domain.

Belongs to the Hfq family. Homohexamer.

In terms of biological role, RNA chaperone that binds small regulatory RNA (sRNAs) and mRNAs to facilitate mRNA translational regulation in response to envelope stress, environmental stress and changes in metabolite concentrations. Also binds with high specificity to tRNAs. The chain is RNA-binding protein Hfq from Idiomarina loihiensis (strain ATCC BAA-735 / DSM 15497 / L2-TR).